The chain runs to 1336 residues: Adhesion G protein-coupled receptor A2 (1336 aa).

The N-terminal stretch at 1-33 (MGAGGRRMPVPPARLLLLPLLPCLLLLAPGTRG) is a signal peptide. Topologically, residues 34–769 (APGCPVPIRG…AGGSGAGLHP (736 aa)) are extracellular. N84 and N101 each carry an N-linked (GlcNAc...) asparagine glycan. 4 LRR repeats span residues 85 to 106 (GTIT…SFLG), 109 to 130 (LLEK…AFLG), 133 to 154 (ELKR…TFQG), and 157 to 178 (RLLR…VFDE). Residue N162 is glycosylated (N-linked (GlcNAc...) asparagine). The LRRCT domain occupies 190–241 (EFLTCDCRLRWLLPWARNHSLQLSERTLCAYPSALHAHALSSLQESQLRCEG). In terms of domain architecture, Ig-like spans 247–344 (THYLIPSLRQ…GNTSKKVEIV (98 aa)). The cysteines at positions 268 and 328 are disulfide-linked. N275 carries an N-linked (GlcNAc...) asparagine glycan. Residues 362-364 (RGD) carry the RGD motif. The region spanning 594–757 (FRCTTGRPNI…AVLMELNAFP (164 aa)) is the GAIN-B domain. N-linked (GlcNAc...) asparagine glycosylation is found at N602, N691, and N735. A GPS region spans residues 711–757 (AAWWNQDGPGGWSSEGCRLRYSQPNVSSLYCQHLGNVAVLMELNAFP). C727 and C741 are disulfide-bonded. The chain crosses the membrane as a helical span at residues 770 to 790 (VVYPCTALLLLCLFSTIITYI). Residues 791 to 805 (LNHSSIHVSRKGWHM) are Cytoplasmic-facing. Residues 806 to 826 (LLNLCFHMAMTSAVFVGGVTL) traverse the membrane as a helical segment. Residues 827 to 830 (TNYQ) are Extracellular-facing. Residues 831-851 (MVCQAVGITLHYSSLSSLLWM) form a helical membrane-spanning segment. Residues 852–884 (GVKARVLHKELSWRAPPLEEGEAAPPGPRPMLR) lie on the Cytoplasmic side of the membrane. The chain crosses the membrane as a helical span at residues 885 to 905 (FYLIAGGIPLIICGITAAVNI). Residues 906–922 (HNYRDHSPYCWLVWRPS) lie on the Extracellular side of the membrane. Residues 923 to 943 (LGAFYIPVALILPITWIYFLC) traverse the membrane as a helical segment. Over 944–1016 (AGLHLRSHVA…DGVYSPGVQL (73 aa)) the chain is Cytoplasmic. Residues 1017–1037 (GALMTTHFLYLAMWACGALAV) traverse the membrane as a helical segment. Topologically, residues 1038 to 1044 (SQRWLPR) are extracellular. The helical transmembrane segment at 1045-1065 (VVCSCLYGVAASALGLFVFTH) threads the bilayer. Over 1066–1336 (HCARRRDVRA…TGLWKSETTV (271 aa)) the chain is Cytoplasmic. The segment covering 1084–1095 (ASPSASHVPARA) has biased composition (low complexity). The segment at 1084–1310 (ASPSASHVPA…NGAPKGGKYE (227 aa)) is disordered. S1104 carries the post-translational modification Phosphoserine. Positions 1110-1124 (GPASLKSSPSGSSGR) are enriched in low complexity. Residues 1133 to 1143 (TNLQVAQSQVC) show a composition bias toward polar residues. Positions 1166–1186 (PRHHNNLHHGRRVHKSRAKGH) are enriched in basic residues. A compositionally biased stretch (polar residues) spans 1213–1234 (SSESGSLHNSPSDSYPGSSRNS). Residues 1333-1336 (ETTV) carry the PDZ-binding motif.

Belongs to the G-protein coupled receptor 2 family. Adhesion G-protein coupled receptor (ADGR) subfamily. In terms of assembly, interacts with RECK; the interaction is direct. Interacts (via PDZ-binding motif) with DLG1 (via PDZ domains). The cleaved extracellular subunit interacts with the integrin heterodimer ITGAV:ITGB3. Post-translationally, glycosylated. In terms of processing, proteolytically cleaved into two subunits, an extracellular subunit and a seven-transmembrane subunit. Cleaved by thrombin (F2) and MMP1. Also cleaved by MMP9, with lower efficiency. Presence of the protein disulfide-isomerase P4HB at the cell surface is additionally required for shedding of the extracellular subunit, suggesting that the subunits are linked by disulfide bonds. Shedding is enhanced by the growth factor FGF2 and may promote cell survival during angiogenesis. In terms of tissue distribution, abundantly expressed in the vasculature of the developing embryo. Expression in normal adult tissues is specifically vascular with endothelial expression in CNS, including brain and retina and more widespread pericyte expression in the brain and organs, including the kidney, pancreas and corpus luteum.

The protein resides in the cell membrane. It localises to the cell projection. It is found in the filopodium. Functionally, endothelial receptor which functions together with RECK to enable brain endothelial cells to selectively respond to Wnt7 signals (WNT7A or WNT7B). Plays a key role in Wnt7-specific responses, such as endothelial cell sprouting and migration in the forebrain and neural tube, and establishment of the blood-brain barrier. Acts as a Wnt7-specific coactivator of canonical Wnt signaling: required to deliver RECK-bound Wnt7 to frizzled by assembling a higher-order RECK-ADGRA2-Fzd-LRP5-LRP6 complex. ADGRA2-tethering function does not rely on its G-protein coupled receptor (GPCR) structure but instead on its combined capacity to interact with RECK extracellularly and recruit the Dishevelled scaffolding protein intracellularly. Binds to the glycosaminoglycans heparin, heparin sulfate, chondroitin sulfate and dermatan sulfate. This chain is Adhesion G protein-coupled receptor A2, found in Mus musculus (Mouse).